A 602-amino-acid chain; its full sequence is Peptide-N(4)-(N-acetyl-beta-glucosaminyl)asparagine amidase (602 aa).

One can recognise a Thioredoxin domain in the interval 2-130; the sequence is PVREVSRLPE…EKKFLERFVG (129 aa). Zn(2+) is bound by residues cysteine 189, cysteine 192, cysteine 222, and cysteine 225. The active-site Nucleophile is the cysteine 248. Residues histidine 275 and aspartate 292 contribute to the active site. One can recognise a PAW domain in the interval 400-602; it reads DMGGRTTGSK…ESMVVRVYMK (203 aa).

It belongs to the transglutaminase-like superfamily. PNGase family. Zn(2+) is required as a cofactor.

It is found in the cytoplasm. The protein localises to the endoplasmic reticulum. It carries out the reaction Hydrolysis of an N(4)-(acetyl-beta-D-glucosaminyl)asparagine residue in which the glucosamine residue may be further glycosylated, to yield a (substituted) N-acetyl-beta-D-glucosaminylamine and a peptide containing an aspartate residue.. In terms of biological role, specifically deglycosylates the denatured form of N-linked glycoproteins in the cytoplasm and assists their proteasome-mediated degradation. Cleaves the beta-aspartyl-glucosamine (GlcNAc) of the glycan and the amide side chain of Asn, converting Asn to Asp. Prefers proteins containing high-mannose over those bearing complex type oligosaccharides. Can recognize misfolded proteins in the endoplasmic reticulum that are exported to the cytosol to be destroyed and deglycosylate them, while it has no activity toward native proteins. Deglycosylation is a prerequisite for subsequent proteasome-mediated degradation of some, but not all, misfolded glycoproteins. Also displays oxidoreductase (thioredoxin) activity. The polypeptide is Peptide-N(4)-(N-acetyl-beta-glucosaminyl)asparagine amidase (png-1) (Caenorhabditis briggsae).